The following is a 456-amino-acid chain: ATP synthase subunit beta (456 aa).

Position 135 to 142 (135 to 142 (GGAGVGKT)) interacts with ATP.

This sequence belongs to the ATPase alpha/beta chains family. As to quaternary structure, F-type ATPases have 2 components, CF(1) - the catalytic core - and CF(0) - the membrane proton channel. CF(1) has five subunits: alpha(3), beta(3), gamma(1), delta(1), epsilon(1). CF(0) has four main subunits: a(1), b(1), b'(1) and c(9-12).

It localises to the cellular thylakoid membrane. It carries out the reaction ATP + H2O + 4 H(+)(in) = ADP + phosphate + 5 H(+)(out). Functionally, produces ATP from ADP in the presence of a proton gradient across the membrane. The catalytic sites are hosted primarily by the beta subunits. This Acaryochloris marina (strain MBIC 11017) protein is ATP synthase subunit beta (atpD).